Here is a 711-residue protein sequence, read N- to C-terminus: Myb-like protein B (711 aa).

Low complexity predominate over residues 24-50 (QPQQSIQQQQQQQQQQQQQQQQQQQQQ). Disordered regions lie at residues 24-70 (QPQQ…SPQL) and 113-235 (NYHT…IINN). Composition is skewed to polar residues over residues 113-139 (NYHT…SPPT) and 148-157 (TPLSSSTGFS). 2 stretches are compositionally biased toward low complexity: residues 158–187 (NNNN…NNNI) and 198–235 (NNYP…IINN). HTH myb-type domains are found at residues 428–490 (RESI…SPEI) and 491–542 (KKGS…SRQT). 2 DNA-binding regions (H-T-H motif) span residues 462-486 (WKKI…KRVL) and 514-538 (WKNV…KAIM). A Myb-like domain is found at 540–598 (RQTEWNQLEDDILTKKIKLMTQNNEKISFQQVSKHLARAKTTKIPRTALECKSRWSQLN). The interval 598–640 (NSTNVNNNNNNNNNSITTSSSNTNQQQQSTMVTPTSSPLSSPI) is disordered.

The protein localises to the nucleus. In terms of biological role, transcriptional activator that initiates multicellular development by induction of adenylyl cyclase expression. This chain is Myb-like protein B (mybB), found in Dictyostelium discoideum (Social amoeba).